The sequence spans 98 residues: uncharacterized protein (98 aa).

This is an uncharacterized protein from Thermotoga maritima (strain ATCC 43589 / DSM 3109 / JCM 10099 / NBRC 100826 / MSB8).